The following is a 245-amino-acid chain: tRNA1(Val) (adenine(37)-N6)-methyltransferase (245 aa).

This sequence belongs to the methyltransferase superfamily. tRNA (adenine-N(6)-)-methyltransferase family.

It localises to the cytoplasm. It catalyses the reaction adenosine(37) in tRNA1(Val) + S-adenosyl-L-methionine = N(6)-methyladenosine(37) in tRNA1(Val) + S-adenosyl-L-homocysteine + H(+). Functionally, specifically methylates the adenine in position 37 of tRNA(1)(Val) (anticodon cmo5UAC). In Escherichia fergusonii (strain ATCC 35469 / DSM 13698 / CCUG 18766 / IAM 14443 / JCM 21226 / LMG 7866 / NBRC 102419 / NCTC 12128 / CDC 0568-73), this protein is tRNA1(Val) (adenine(37)-N6)-methyltransferase.